A 245-amino-acid polypeptide reads, in one-letter code: MSQVNMRDMLKAGVHFGHQTRYWNPKMGKYIFGARNKIHIINLEKTLPMFNEALTFVERLAQGKNKILFVGTKRSAGKIVAEEAARCGSPYVDHRWLGGMLTNYKTIRASIKRLRDLEVQAEDGTFAKLTKKEALMRTRDLEKLDRSLGGIKDMGGLPDALFVIDVDHERIAITEANKLGIPVIGVVDTNSSPEGVDYIIPGNDDAIRAIQLYMGSMADAVIRGRNNVAGGTEVFEEAAAPAAEA.

It belongs to the universal ribosomal protein uS2 family.

The polypeptide is Small ribosomal subunit protein uS2 (Pseudomonas fluorescens (strain ATCC BAA-477 / NRRL B-23932 / Pf-5)).